The following is a 162-amino-acid chain: Regulatory protein RecX (162 aa).

The protein belongs to the RecX family.

The protein localises to the cytoplasm. Modulates RecA activity. This chain is Regulatory protein RecX, found in Xanthomonas oryzae pv. oryzae (strain PXO99A).